We begin with the raw amino-acid sequence, 285 residues long: Golgi to ER traffic protein 2 (285 aa).

The span at 1 to 10 (MSELTEAEKR) shows a compositional bias: basic and acidic residues. Disordered regions lie at residues 1 to 72 (MSEL…KEDS) and 87 to 106 (MQGQ…PDLL). Residue serine 2 is modified to N-acetylserine. Residues 2–148 (SELTEAEKRR…LDYHDYLLNR (147 aa)) lie on the Cytoplasmic side of the membrane. Positions 11 to 20 (RLLRERRQKK) are enriched in basic residues. Over residues 24 to 42 (GGASSRLNKITGQASSHLN) the composition is skewed to polar residues. Serine 45 is subject to Phosphoserine. A compositionally biased stretch (low complexity) spans 49–60 (APSAAKTTPPAS). The segment covering 93–104 (GKSTPQDSSTPD) has biased composition (polar residues). Residues 149–169 (LKAWTILVKWVFFLLPYLYLI) traverse the membrane as a helical segment. The Lumenal portion of the chain corresponds to 170-196 (TRPNSSVWPAYAFTQSAWFAPLRNPSN). N-linked (GlcNAc...) asparagine glycans are attached at residues asparagine 173 and asparagine 196. A helical membrane pass occupies residues 197-216 (FTRIFATFEFLSISIYYQLL). At 217 to 263 (KNVEHKSKIKNLQDTNKLVKLVSLVPEGVIPVANLKGKLITLLQYWD) the chain is on the cytoplasmic side. The chain crosses the membrane as a helical span at residues 264-284 (LLSMLITDISFVLIVLGLLTY). Position 285 (leucine 285) is a topological domain, lumenal.

This sequence belongs to the GET2 family. As to quaternary structure, component of the Golgi to ER traffic (GET) complex, which is composed of GET1, GET2 and GET3. Within the complex, GET1 and GET2 form a heterotetramer which is stabilized by phosphatidylinositol binding and which binds to the GET3 homodimer.

The protein localises to the endoplasmic reticulum membrane. It is found in the golgi apparatus membrane. Functionally, required for the post-translational delivery of tail-anchored (TA) proteins to the endoplasmic reticulum. Together with GET1, acts as a membrane receptor for soluble GET3, which recognizes and selectively binds the transmembrane domain of TA proteins in the cytosol. The GET complex cooperates with the HDEL receptor ERD2 to mediate the ATP-dependent retrieval of resident ER proteins that contain a C-terminal H-D-E-L retention signal from the Golgi to the ER. Involved in DNA replication and DNA damage response and also in cell wall function. The sequence is that of Golgi to ER traffic protein 2 from Saccharomyces cerevisiae (strain RM11-1a) (Baker's yeast).